The sequence spans 462 residues: Semenogelin-1 (462 aa).

An N-terminal signal peptide occupies residues 1–23; sequence MKPNIIFVLSLLLILEKQAAVMG. A Pyrrolidone carboxylic acid modification is found at glutamine 24. Residues 24 to 61 are disordered; it reads QKGGSKGRLPSEFSQFPHGQKGQHYSGQKGKQQTESKG. Positions 46-61 are enriched in polar residues; sequence QHYSGQKGKQQTESKG. A run of 3 repeats spans residues 70–129, 141–200, and 201–260. A repeat-rich region region spans residues 70 to 439; it reads HVDANDHDQS…SHGGLDIVII (370 aa). Disordered stretches follow at residues 131–157 and 173–194; these read KGGKAHRGTQNPSQDQGNSPSGKGISS and KEQTSVSGAQKGRKQGGSQSSY. The span at 138 to 157 shows a compositional bias: polar residues; that stretch reads GTQNPSQDQGNSPSGKGISS. The segment at 164–283 is interaction with EPPIN; sequence ERLWVHGLSK…NQDQQHGRKA (120 aa). A 2 X 60 AA tandem repeats, type 1 region spans residues 261–380; sequence LVYNKNQHQT…QRSIYSQTEK (120 aa). The interval 270–432 is disordered; it reads TKNLNQDQQH…KGRHQHGSHG (163 aa). Composition is skewed to polar residues over residues 308–317, 324–335, and 343–352; these read DVSQSSIYSQ, GKSQKQITIPSQ, and ANKISYQSSS. The 3-2 repeat unit spans residues 381–439; that stretch reads LVAGKSQIQAPNPKQEPWHGENAKGESGQSTNREQDLLSHEQKGRHQHGSHGGLDIVII. The span at 413 to 424 shows a compositional bias: basic and acidic residues; sequence REQDLLSHEQKG.

It belongs to the semenogelin family. In terms of assembly, occurs in disulfide-linked complexes which may also contain two less abundant 71- and 76-kDa semenogelin-related polypeptides. Interacts with EPPIN (via C-terminus); Cys-239 is a critical amino acid for both binding to EPPIN. Post-translationally, transglutaminase substrate. In terms of processing, rapidly cleaved after ejaculation by KLK3/PSA, resulting in liquefaction of the semen coagulum and the progressive release of motile spermatozoa. As to expression, seminal vesicle.

It localises to the secreted. Its function is as follows. Predominant protein in semen. It participates in the formation of a gel matrix entrapping the accessory gland secretions and ejaculated spermatozoa. Fragments of semenogelin and/or fragments of the related proteins may contribute to the activation of progressive sperm movements as the gel-forming proteins are fragmented by KLK3/PSA. Alpha-inhibin-92 and alpha-inhibin-31, derived from the proteolytic degradation of semenogelin, inhibit the secretion of pituitary follicle-stimulating hormone. The polypeptide is Semenogelin-1 (SEMG1) (Homo sapiens (Human)).